Reading from the N-terminus, the 218-residue chain is Major NAD(P)H-flavin oxidoreductase (218 aa).

Residues 12-16 (RYTSK) and asparagine 73 contribute to the FMN site. 154–159 (LARLNI) provides a ligand contact to NAD(+). Residues 165 to 166 (EG) and 206 to 208 (KSR) each bind FMN.

It belongs to the nitroreductase family. In terms of assembly, homodimer. It depends on FMN as a cofactor.

Its function is as follows. Involved in bioluminescence. It is a good supplier of reduced flavin mononucleotide (FMNH2) to the bioluminescence reaction. Major FMN reductase. It is capable of using both NADH and NADPH as electron donors. As electron acceptor, FMN is the most effective, FAD is considerably effective, and riboflavin is the least effective. This is Major NAD(P)H-flavin oxidoreductase from Aliivibrio fischeri (Vibrio fischeri).